Here is a 149-residue protein sequence, read N- to C-terminus: Deoxyuridine 5'-triphosphate nucleotidohydrolase (149 aa).

Residues 70 to 72 (RSG), Asn-83, and 87 to 89 (LID) contribute to the substrate site.

This sequence belongs to the dUTPase family. Mg(2+) is required as a cofactor.

The catalysed reaction is dUTP + H2O = dUMP + diphosphate + H(+). Its pathway is pyrimidine metabolism; dUMP biosynthesis; dUMP from dCTP (dUTP route): step 2/2. Its function is as follows. This enzyme is involved in nucleotide metabolism: it produces dUMP, the immediate precursor of thymidine nucleotides and it decreases the intracellular concentration of dUTP so that uracil cannot be incorporated into DNA. This is Deoxyuridine 5'-triphosphate nucleotidohydrolase from Blochmanniella pennsylvanica (strain BPEN).